A 562-amino-acid chain; its full sequence is Tryptophan 2-monooxygenase (562 aa).

FMN is bound by residues serine 54, glutamate 74, arginine 76, arginine 82, and arginine 104. Arginine 104 contributes to the substrate binding site.

This sequence belongs to the tryptophan 2-monooxygenase family. FMN is required as a cofactor.

The enzyme catalyses L-tryptophan + O2 = indole-3-acetamide + CO2 + H2O. The protein operates within plant hormone metabolism; auxin biosynthesis. This Pantoea agglomerans pv. gypsophilae (Erwinia herbicola) protein is Tryptophan 2-monooxygenase (iaaM).